The sequence spans 221 residues: 3-phospho-D-glycerate guanylyltransferase (221 aa).

This sequence belongs to the CofC family.

The enzyme catalyses (2R)-3-phosphoglycerate + GTP + H(+) = 3-[(R)-glyceryl]-diphospho-5'-guanosine + diphosphate. The catalysed reaction is (2S)-2-phospholactate + GTP + H(+) = (2S)-lactyl-2-diphospho-5'-guanosine + diphosphate. Its pathway is cofactor biosynthesis; coenzyme F420 biosynthesis. Guanylyltransferase that catalyzes the activation of (2R)-3-phosphoglycerate (3PG) as 3-[(R)-glyceryl]-diphospho-5'-guanosine, via the condensation of 3PG with GTP. It is involved in the biosynthesis of a derivative of the hydride carrier cofactor coenzyme F420, 3PG-F420. Can also use (2S)-2-phospholactate (2-PL), with lower turnover, and has weak activity with phosphoenolpyruvate (PEP). This is 3-phospho-D-glycerate guanylyltransferase from Mycetohabitans rhizoxinica (strain DSM 19002 / CIP 109453 / HKI 454) (Paraburkholderia rhizoxinica).